The chain runs to 399 residues: S-adenosylmethionine synthase (399 aa).

Histidine 16 serves as a coordination point for ATP. Aspartate 18 is a Mg(2+) binding site. Glutamate 44 serves as a coordination point for K(+). L-methionine contacts are provided by glutamate 57 and glutamine 100. The segment at 100 to 110 is flexible loop; sequence QSPDIAQGVDD. ATP-binding positions include 174–176, 241–242, aspartate 250, 256–257, alanine 273, and lysine 277; these read DAK, RF, and RK. Residue aspartate 250 participates in L-methionine binding. Position 281 (lysine 281) interacts with L-methionine.

It belongs to the AdoMet synthase family. Homotetramer; dimer of dimers. Mg(2+) serves as cofactor. It depends on K(+) as a cofactor.

Its subcellular location is the cytoplasm. The catalysed reaction is L-methionine + ATP + H2O = S-adenosyl-L-methionine + phosphate + diphosphate. It functions in the pathway amino-acid biosynthesis; S-adenosyl-L-methionine biosynthesis; S-adenosyl-L-methionine from L-methionine: step 1/1. Catalyzes the formation of S-adenosylmethionine (AdoMet) from methionine and ATP. The overall synthetic reaction is composed of two sequential steps, AdoMet formation and the subsequent tripolyphosphate hydrolysis which occurs prior to release of AdoMet from the enzyme. This chain is S-adenosylmethionine synthase, found in Latilactobacillus sakei subsp. sakei (strain 23K) (Lactobacillus sakei subsp. sakei).